The primary structure comprises 527 residues: RUS family member 1 (527 aa).

N-linked (GlcNAc...) asparagine glycosylation is present at asparagine 21. Residues 220–240 (SQETAVNLVGMLLSVIVSSFI) traverse the membrane as a helical segment. An N-linked (GlcNAc...) asparagine glycan is attached at asparagine 243. A helical membrane pass occupies residues 245–265 (SLIVTWLVFLFFTSLHLFCNY). Residue asparagine 346 is glycosylated (N-linked (GlcNAc...) asparagine). Residues 350–426 (TKNVNNNNNN…NNNNNNNNNK (77 aa)) form a disordered region. 2 N-linked (GlcNAc...) asparagine glycosylation sites follow: asparagine 467 and asparagine 497.

The protein belongs to the RUS1 family.

It is found in the membrane. This Dictyostelium discoideum (Social amoeba) protein is RUS family member 1 (rusf1).